Consider the following 89-residue polypeptide: Small ribosomal subunit protein uS19 (89 aa).

Belongs to the universal ribosomal protein uS19 family.

Protein S19 forms a complex with S13 that binds strongly to the 16S ribosomal RNA. The protein is Small ribosomal subunit protein uS19 of Xylella fastidiosa (strain 9a5c).